Consider the following 342-residue polypeptide: Lipopolysaccharide heptosyltransferase 1 (342 aa).

ADP-L-glycero-beta-D-manno-heptose-binding residues include Ser-188, Ser-189, Lys-193, Glu-225, Asp-268, Ser-269, Gly-270, and His-273.

The protein belongs to the glycosyltransferase 9 family.

The protein resides in the cell inner membrane. It catalyses the reaction an alpha-Kdo-(2-&gt;4)-alpha-Kdo-(2-&gt;6)-lipid A + ADP-L-glycero-beta-D-manno-heptose = an L-alpha-D-Hep-(1-&gt;5)-[alpha-Kdo-(2-&gt;4)]-alpha-Kdo-(2-&gt;6)-lipid A + ADP + H(+). The protein operates within bacterial outer membrane biogenesis; LPS core biosynthesis. In terms of biological role, glycosyltransferase involved in the biosynthesis of the core oligosaccharide region of lipopolysaccharide (LPS). Catalyzes the addition of the first heptose unit to one 3-deoxy-D-manno-octulosonic acid (Kdo) residue of the Kdo2-lipid A module. The protein is Lipopolysaccharide heptosyltransferase 1 of Campylobacter coli.